The sequence spans 320 residues: N-acetylneuraminate lyase (320 aa).

Residues Thr51 and Thr52 each coordinate aceneuramate. Tyr143 (proton donor) is an active-site residue. Catalysis depends on Lys173, which acts as the Schiff-base intermediate with substrate. Aceneuramate is bound by residues Ser175, Gly199, Asp201, Glu202, and Ser218.

This sequence belongs to the DapA family. NanA subfamily. Homotetramer.

It localises to the cytoplasm. It carries out the reaction aceneuramate = aldehydo-N-acetyl-D-mannosamine + pyruvate. It participates in amino-sugar metabolism; N-acetylneuraminate degradation. Its function is as follows. Catalyzes the cleavage of N-acetylneuraminic acid (sialic acid) to form pyruvate and N-acetylmannosamine via a Schiff base intermediate. It prevents sialic acids from being recycled and returning to the cell surface. Involved in the N-glycolylneuraminic acid (Neu5Gc) degradation pathway. The protein is N-acetylneuraminate lyase of Pongo abelii (Sumatran orangutan).